The primary structure comprises 260 residues: Adenosylcobinamide-GDP ribazoletransferase (260 aa).

7 helical membrane passes run 42–62 (PLAG…ANAI), 64–84 (LPPL…TGAL), 117–137 (FAAL…MAII), 144–164 (YALL…LAFW), 192–212 (GLGL…VALI), 214–234 (ALVL…AKIG), and 240–260 (TLGA…VMAL).

The protein belongs to the CobS family. Mg(2+) serves as cofactor.

The protein localises to the cell inner membrane. It carries out the reaction alpha-ribazole + adenosylcob(III)inamide-GDP = adenosylcob(III)alamin + GMP + H(+). The enzyme catalyses alpha-ribazole 5'-phosphate + adenosylcob(III)inamide-GDP = adenosylcob(III)alamin 5'-phosphate + GMP + H(+). Its pathway is cofactor biosynthesis; adenosylcobalamin biosynthesis; adenosylcobalamin from cob(II)yrinate a,c-diamide: step 7/7. Joins adenosylcobinamide-GDP and alpha-ribazole to generate adenosylcobalamin (Ado-cobalamin). Also synthesizes adenosylcobalamin 5'-phosphate from adenosylcobinamide-GDP and alpha-ribazole 5'-phosphate. The sequence is that of Adenosylcobinamide-GDP ribazoletransferase from Brucella abortus (strain S19).